Reading from the N-terminus, the 204-residue chain is FMN-dependent NADH:quinone oxidoreductase (204 aa).

FMN-binding positions include serine 10, 16 to 18 (SIS), and 96 to 99 (MYNF).

It belongs to the azoreductase type 1 family. As to quaternary structure, homodimer. The cofactor is FMN.

The enzyme catalyses 2 a quinone + NADH + H(+) = 2 a 1,4-benzosemiquinone + NAD(+). It catalyses the reaction N,N-dimethyl-1,4-phenylenediamine + anthranilate + 2 NAD(+) = 2-(4-dimethylaminophenyl)diazenylbenzoate + 2 NADH + 2 H(+). Functionally, quinone reductase that provides resistance to thiol-specific stress caused by electrophilic quinones. Also exhibits azoreductase activity. Catalyzes the reductive cleavage of the azo bond in aromatic azo compounds to the corresponding amines. The sequence is that of FMN-dependent NADH:quinone oxidoreductase from Herminiimonas arsenicoxydans.